A 21-amino-acid chain; its full sequence is Tertiapin (21 aa).

Intrachain disulfides connect cysteine 3-cysteine 14 and cysteine 5-cysteine 18.

In terms of processing, oxidation of Met-13 results in the loss of biological activity. An amidation at Lys-21 is suggested in Ref.1. Expressed by the venom gland.

It localises to the secreted. Presynaptic neurotoxin that blocks the inwardly rectifying Kir1.1/KCNJ1 and Kir3.1/3.4 (KCNJ3/KCNJ5) potassium channels with high affinity by binding to the M1-M2 linker region of these channels in a 1:1 stoichiometry. It may block the potassium channel pore by occluding its alpha helix into the channel vestibule. Tertiapin-Q also inhibits calcium-activated large conductance BK-type (KCNMA) potassium channels in a concentration-, and voltage-dependent manner, in addition to inhibiting Kir3.1/3.2 (KCNJ3/KCNJ6) heteromultimers potassium channels. It can prevent dose-dependently acetylcholine(ACh)-induced atrioventricular blocks in mammalian hearts, as KCNJ3/KCNJ5 channels (also named I(KACh), because these channels are activated by ACh) are found in mammalian myocytes. Interacts specifically with calmodulin in the presence of calcium. In Apis mellifera (Honeybee), this protein is Tertiapin.